Reading from the N-terminus, the 208-residue chain is FMN-dependent NADH:quinone oxidoreductase (208 aa).

FMN is bound by residues S10, 16-18 (SRS), and 96-99 (MYNF).

The protein belongs to the azoreductase type 1 family. Homodimer. FMN serves as cofactor.

It carries out the reaction 2 a quinone + NADH + H(+) = 2 a 1,4-benzosemiquinone + NAD(+). It catalyses the reaction N,N-dimethyl-1,4-phenylenediamine + anthranilate + 2 NAD(+) = 2-(4-dimethylaminophenyl)diazenylbenzoate + 2 NADH + 2 H(+). Quinone reductase that provides resistance to thiol-specific stress caused by electrophilic quinones. Functionally, also exhibits azoreductase activity. Catalyzes the reductive cleavage of the azo bond in aromatic azo compounds to the corresponding amines. This Xanthobacter autotrophicus (strain ATCC BAA-1158 / Py2) protein is FMN-dependent NADH:quinone oxidoreductase.